The chain runs to 493 residues: Neuronal pentraxin receptor (493 aa).

Residues 1-2 lie on the Cytoplasmic side of the membrane; it reads MK. Residues 3-23 form a helical; Signal-anchor for type II membrane protein membrane-spanning segment; sequence FLAVLLAAGMLAFLGAVICII. The Extracellular segment spans residues 24–493; that stretch reads ASVPLAASPA…FDVCKGRAKA (470 aa). The interval 37 to 72 is disordered; sequence PGGTDNASAASAAGGSGPQRSLSALHSAGGSAGPSV. N-linked (GlcNAc...) asparagine glycosylation occurs at Asn-42. Over residues 57–72 the composition is skewed to low complexity; that stretch reads SLSALHSAGGSAGPSV. Residue Asn-211 is glycosylated (N-linked (GlcNAc...) asparagine). The region spanning 285–487 is the Pentraxin (PTX) domain; sequence DAFKVSIPIR…GAKKAAFDVC (203 aa). Residues Cys-315 and Cys-376 are joined by a disulfide bond. Positions 340, 418, 419, 420, and 430 each coordinate Ca(2+). N-linked (GlcNAc...) asparagine glycosylation is present at Asn-456.

As to quaternary structure, heteropentamer with NPTX1 and/or NPTX2. Also binds taipoxin-associated calcium-binding protein 49 (TCBP49/RCN2). Interacts with KLHL2. Ca(2+) is required as a cofactor. Post-translationally, ubiquitinated by a cullin-RING-based BCR (BTB-CUL3-RBX1) E3 ubiquitin-protein ligase complex containing KLHL2.

Its subcellular location is the membrane. Functionally, may be involved in mediating uptake of synaptic material during synapse remodeling or in mediating the synaptic clustering of AMPA glutamate receptors at a subset of excitatory synapses. The protein is Neuronal pentraxin receptor (Nptxr) of Mus musculus (Mouse).